The chain runs to 212 residues: Probable dual specificity protein phosphatase DDB_G0269404 (212 aa).

One can recognise a Tyrosine-protein phosphatase domain in the interval 30 to 169 (FDAQEVIPNL…LINYEATILK (140 aa)). Cys113 acts as the Phosphocysteine intermediate in catalysis.

It belongs to the protein-tyrosine phosphatase family. Non-receptor class dual specificity subfamily.

It carries out the reaction O-phospho-L-tyrosyl-[protein] + H2O = L-tyrosyl-[protein] + phosphate. The enzyme catalyses O-phospho-L-seryl-[protein] + H2O = L-seryl-[protein] + phosphate. It catalyses the reaction O-phospho-L-threonyl-[protein] + H2O = L-threonyl-[protein] + phosphate. Has a dual specificity toward Ser/Thr and Tyr-containing proteins. The protein is Probable dual specificity protein phosphatase DDB_G0269404 of Dictyostelium discoideum (Social amoeba).